We begin with the raw amino-acid sequence, 77 residues long: Surfactant-associated protein 2 (77 aa).

The signal sequence occupies residues 1–19 (MESLMRLFLLLALLSSSHA). N-linked (GlcNAc...) asparagine glycosylation occurs at Asn61.

N-glycosylated. In terms of tissue distribution, expressed in lung, and specifically in alveolar type II epithelial cells.

It is found in the secreted. The protein resides in the cytoplasmic vesicle. Its subcellular location is the secretory vesicle. It localises to the golgi apparatus. Putative surfactant protein. This is Surfactant-associated protein 2 from Mus musculus (Mouse).